We begin with the raw amino-acid sequence, 169 residues long: 2-C-methyl-D-erythritol 2,4-cyclodiphosphate synthase (169 aa).

Residues Asp13 and His15 each contribute to the a divalent metal cation site. 4-CDP-2-C-methyl-D-erythritol 2-phosphate contacts are provided by residues 13–15 and 39–40; these read DVH and HS. A divalent metal cation is bound at residue His47. 4-CDP-2-C-methyl-D-erythritol 2-phosphate-binding positions include 61-63, 66-70, Phe144, and Arg147; these read DIG and FPDTD.

It belongs to the IspF family. Homotrimer. The cofactor is a divalent metal cation.

It carries out the reaction 4-CDP-2-C-methyl-D-erythritol 2-phosphate = 2-C-methyl-D-erythritol 2,4-cyclic diphosphate + CMP. Its pathway is isoprenoid biosynthesis; isopentenyl diphosphate biosynthesis via DXP pathway; isopentenyl diphosphate from 1-deoxy-D-xylulose 5-phosphate: step 4/6. Its function is as follows. Involved in the biosynthesis of isopentenyl diphosphate (IPP) and dimethylallyl diphosphate (DMAPP), two major building blocks of isoprenoid compounds. Catalyzes the conversion of 4-diphosphocytidyl-2-C-methyl-D-erythritol 2-phosphate (CDP-ME2P) to 2-C-methyl-D-erythritol 2,4-cyclodiphosphate (ME-CPP) with a corresponding release of cytidine 5-monophosphate (CMP). In Cupriavidus pinatubonensis (strain JMP 134 / LMG 1197) (Cupriavidus necator (strain JMP 134)), this protein is 2-C-methyl-D-erythritol 2,4-cyclodiphosphate synthase.